Here is a 126-residue protein sequence, read N- to C-terminus: Fluoride-specific ion channel FluC 2 (126 aa).

4 consecutive transmembrane segments (helical) span residues 5-25 (TALTVAIWIGVMLIGGIGSVL), 44-64 (GTLTVNITGAALLGFLAGLAL), 68-88 (AALLAGTGFVGAYTTFSTWML), and 99-119 (MVSALANIVVSVVLGLAAALL). 2 residues coordinate Na(+): Gly-78 and Thr-81.

It belongs to the fluoride channel Fluc/FEX (TC 1.A.43) family.

Its subcellular location is the cell membrane. It catalyses the reaction fluoride(in) = fluoride(out). Its activity is regulated as follows. Na(+) is not transported, but it plays an essential structural role and its presence is essential for fluoride channel function. In terms of biological role, fluoride-specific ion channel. Important for reducing fluoride concentration in the cell, thus reducing its toxicity. The sequence is that of Fluoride-specific ion channel FluC 2 from Mycobacterium bovis (strain ATCC BAA-935 / AF2122/97).